A 404-amino-acid chain; its full sequence is uncharacterized protein (404 aa).

The segment covering 262–278 (VSTGDTSPCGTEDSSPA) has biased composition (polar residues). Disordered stretches follow at residues 262-307 (VSTG…SPSL) and 319-340 (MKKS…SGAD). Phosphoserine occurs at positions 268, 276, and 279. A phosphothreonine mark is found at T290 and T293. Residues S304, S306, S324, S358, and S362 each carry the phosphoserine modification. Positions 319–336 (MKKSHSANDSEEFFREDD) are enriched in basic and acidic residues.

This is an uncharacterized protein from Mus musculus (Mouse).